The primary structure comprises 183 residues: uncharacterized protein (183 aa).

Residues 27–170 (MIKLIDSARS…VAEIMMQKHL (144 aa)) enclose the SIS domain.

Belongs to the SIS family. PHI subfamily.

This is an uncharacterized protein from Archaeoglobus fulgidus (strain ATCC 49558 / DSM 4304 / JCM 9628 / NBRC 100126 / VC-16).